The sequence spans 463 residues: Calcitonin gene-related peptide type 1 receptor (463 aa).

Positions 1–22 (MDKKHILCFLVLLPLNMALISA) are cleaved as a signal peptide. At 23 to 138 (ESEEGVNQTD…STHEKVKTAL (116 aa)) the chain is on the extracellular side. N-linked (GlcNAc...) asparagine glycosylation is found at Asn-29, Asn-65, Asn-117, Asn-122, Asn-127, and Asn-128. Cystine bridges form between Cys-47–Cys-73, Cys-64–Cys-104, and Cys-87–Cys-126. Residues 139-163 (NLFYLTIIGHGLSIASLIISLIIFF) form a helical membrane-spanning segment. Residues 164-174 (YFKSLSCQRIT) lie on the Cytoplasmic side of the membrane. Residues 175-197 (LHKNLFFSFICNSIVTIIHLTAV) form a helical membrane-spanning segment. Topologically, residues 198-208 (ANNQALVATNP) are extracellular. A helical transmembrane segment spans residues 209-237 (VSCKVSQFIHLYLMGCNYFWMLCEGVYLH). Over 238–251 (TLIVVAVFAEKQHL) the chain is Cytoplasmic. A helical transmembrane segment spans residues 252–272 (MWYYFLGWGFPLLPACIHAIA). Residues 273 to 288 (RSLYYNDNCWISSDTH) are Extracellular-facing. Residues 287 to 288 (TH) are required for RAMP3 interaction. The helical transmembrane segment at 289–313 (LLYIIHGPICAALLVNLFFLLNIVR) threads the bilayer. Over 314 to 328 (VLITKLKVTHQVESN) the chain is Cytoplasmic. A helical transmembrane segment spans residues 329 to 350 (LYMKAVRATLILVPLLGIEFVL). The Extracellular portion of the chain corresponds to 351-365 (FPWRPEGKVAEEVYD). The helical transmembrane segment at 366 to 386 (YVMHILMHFQGLLVATIFCFF) threads the bilayer. Residues 387–463 (NGEVQAILRR…KSENMYDLVM (77 aa)) lie on the Cytoplasmic side of the membrane. A phosphoserine mark is found at Ser-419 and Ser-444.

Belongs to the G-protein coupled receptor 2 family. Heterodimer of CALCRL and RAMP1; the receptor complex functions as CGRP receptor. Heterodimer of CALCRL and RAMP2 or CALCRL and RAMP3; the complexes function as adrenomedullin receptor. In terms of tissue distribution, expressed predominantly in the lung, thymus, heart and brain.

The protein localises to the cell membrane. In terms of biological role, g protein-coupled receptor which specificity is determined by its interaction with receptor-activity-modifying proteins (RAMPs). Together with RAMP1, form the receptor complex for calcitonin-gene-related peptides CALCA/CGRP1 and CALCB/CGRP2. Together with RAMP2 or RAMP3, function as receptor complexes for adrenomedullin (ADM and ADM2). Ligand binding causes a conformation change that triggers signaling via guanine nucleotide-binding proteins (G proteins) and modulates the activity of downstream effectors. Activates cAMP-dependent pathway. The sequence is that of Calcitonin gene-related peptide type 1 receptor from Mus musculus (Mouse).